The primary structure comprises 453 residues: Alpha-glucosidase (453 aa).

Residue 3–69 (TKIVLVGAGS…LPFIVSATTD (67 aa)) coordinates NAD(+). Position 149 (asparagine 149) interacts with substrate. A Mn(2+)-binding site is contributed by cysteine 171. Residue histidine 172 is the Proton donor of the active site. Histidine 201 is a Mn(2+) binding site.

In terms of assembly, homotetramer. Requires Mn(2+) as cofactor. Co(2+) serves as cofactor. It depends on Ca(2+) as a cofactor. The cofactor is Fe(2+). Mg(2+) is required as a cofactor. Requires Sr(2+) as cofactor. Ni(2+) serves as cofactor. It depends on NAD(+) as a cofactor.

It catalyses the reaction Hydrolysis of terminal, non-reducing (1-&gt;4)-linked alpha-D-glucose residues with release of alpha-D-glucose.. It participates in glycan degradation; palatinose degradation. With respect to regulation, is inhibited by EDTA in vitro. Its function is as follows. Alpha-glucosidase with broad specificity. Hydrolyzes maltose, palatinose, maltulose, trehalose, trehalulose, turanose, leucrose, sucrose and maltitol. Is not active against alpha-galactosides, e.g. melibiose, and alpha-mannosides. Shows an obligate requirement for an O-alpha-glycosidic linkage, since it is not able to cleave beta-glycosidic bonds (cellobiose, gentiobiose, lactose, sophorose or laminaribiose). Cannot hydrolyze phosphorylated alpha-glucosides derivatives. Seems to be involved in the degradation of palatinose, a sucrose isomer that is formed as a reserve material under conditions of excess carbon availability, sequestered in a form unavailable to competitors such as fungi or the host plant, and whose consumption appears to be postponed until the preferentially metabolized carbon source (e.g. sucrose) is depleted. The protein is Alpha-glucosidase (palH) of Erwinia rhapontici (Pectobacterium rhapontici).